Consider the following 291-residue polypeptide: Gamma-sarcoglycan (291 aa).

A helical; Signal-anchor for type II membrane protein membrane pass occupies residues 38 to 58 (LFVLLLLIVLLVNFALTIWIL). Over 59-291 (RVMWFSPVGM…TCHEHSHLCL (233 aa)) the chain is Extracellular. N-linked (GlcNAc...) asparagine glycosylation is present at asparagine 110. Intrachain disulfides connect cysteine 265–cysteine 290 and cysteine 267–cysteine 283.

It belongs to the sarcoglycan beta/delta/gamma/zeta family. Interacts with the syntrophin SNTA1. Cross-link to form 2 major subcomplexes: one consisting of SGCB, SGCD and SGCG and the other consisting of SGCB and SGCD. The association between SGCB and SGCG is particularly strong while SGCA is loosely associated with the other sarcoglycans. Interacts with FLNC. Post-translationally, disulfide bonds are present.

It localises to the cell membrane. The protein localises to the sarcolemma. Its subcellular location is the cytoplasm. The protein resides in the cytoskeleton. In terms of biological role, component of the sarcoglycan complex, a subcomplex of the dystrophin-glycoprotein complex which forms a link between the F-actin cytoskeleton and the extracellular matrix. The polypeptide is Gamma-sarcoglycan (SGCG) (Bos taurus (Bovine)).